A 590-amino-acid chain; its full sequence is MKKILAFFLVFALAGAVFADEPSAEAKIAEFKGDAAVTFGVDLDTNRTGFKNEVGGSIKLNLLNGGDKSTTGDGIWGELKLKINAFTLQAKADKNVNLLTKIDDDDVKVEIDTAKIHIGPAYVGIKKGDLNYGSNFWYPNALNYKDGDDEYYNRTPSDKVKYDQGLVLGYEQKDLFKVETAFRSQKDTGKKLDKVEGVILPKDTEIKKGEYFKSVEGAHDNAKTDDVFDDAALVDPIPGKTDVKKLKATXAVFKRVMKDGDTNYWTDKYALGVYGEVKPIKDLRVAIGTAYVFGRLSGDKDVLKAVGDSDNRGDITFFTGAXYKLSLLEKFVVNPVVTYTLYADAKWNGANEKLXYPEXLKTSMLKTGVRFGWGEXKKSNSLLYDFXGKNTLVYDTNKEDKGDDKLLPGVSLFGAFDLVNKNIETKLPLMXTFYSGELVKGLNVAALVHANVAKDASEISRVVPGTVYAGRMTKAXYERLIGAKGLQIGLAASYDVKLNDITIVPAAAMLWTHGMLKGEADTRMTADEFKVEAKVDVKGVIQNTTLSVFWDEAAFGKGTSKEWTFGVKHDEQNYYTLKNGVFGLKAKIAL.

A signal peptide spans 1–19; that stretch reads MKKILAFFLVFALAGAVFA.

The protein resides in the cell outer membrane. Major component of the outer membrane. The sequence is that of Major surface protein MspTL (mspTL) from Treponema lecithinolyticum.